The following is an 878-amino-acid chain: Leucine--tRNA ligase (878 aa).

Residues 56–66 (PYPSGKLHMGH) carry the 'HIGH' region motif. Positions 630 to 634 (KMSKS) match the 'KMSKS' region motif. K633 lines the ATP pocket.

It belongs to the class-I aminoacyl-tRNA synthetase family.

Its subcellular location is the cytoplasm. The catalysed reaction is tRNA(Leu) + L-leucine + ATP = L-leucyl-tRNA(Leu) + AMP + diphosphate. The polypeptide is Leucine--tRNA ligase (Prochlorococcus marinus (strain MIT 9303)).